Consider the following 319-residue polypeptide: Ankyrin repeat domain-containing protein 1 (319 aa).

The stretch at glutamate 63–isoleucine 89 forms a coiled coil. 5 ANK repeats span residues tyrosine 152–phenylalanine 181, leucine 185–alanine 214, leucine 218–alanine 247, glutamate 251–valine 280, and alanine 284–arginine 315.

As to quaternary structure, interacts with TTN/titin and YBX1. As to expression, expressed in heart. In postnatal neonatal heart, it is expressed in an asymmetrical way; left ventricle favored towards right ventricle. Whether or not this could be correlated with a hypertrophic heart is still a matter of debate. Levels increase gradually from newborn to adult.

The protein resides in the nucleus. May play an important role in endothelial cell activation. May act as a nuclear transcription factor that negatively regulates the expression of cardiac genes. This is Ankyrin repeat domain-containing protein 1 (ANKRD1) from Sus scrofa (Pig).